The chain runs to 792 residues: Coiled-coil domain-containing protein R3HCC1L (792 aa).

The EJC-binding motif; may mediate interaction with the EJC stretch occupies residues 7–27; the sequence is RCRVRARRPDMALYVPKARRG. 2 disordered regions span residues 32 to 61 and 527 to 567; these read KTGD…QKEV and EFKT…TSHT. Position 688 is a phosphoserine (S688). T712 carries the phosphothreonine modification. A coiled-coil region spans residues 751-783; it reads RSKQSKTEREAELKKLQEARERKRLEAKQREDI. Residues 772–792 are disordered; sequence RKRLEAKQREDIWEGRDQSTV.

In terms of assembly, may interact with the exon junction complex (EJC) composed at least of CASC3, EIF4A3, MAGOH and RBM8A. In terms of tissue distribution, expressed in placenta.

This is Coiled-coil domain-containing protein R3HCC1L (R3HCC1L) from Homo sapiens (Human).